The primary structure comprises 361 residues: MNLIYNFSAGPAMIPRDVLNQAKKELHNWKNLGSSIMEISHRSEEFIQMALEAEKDLRDLLKIPDSFKVLFCQGGARGQFSAIPMNLLNNLQTADYINSGYWSNSAFMEAKKYCTPRSIFIRETNGVKESLLPMHKWNINENSAYIHYCPNETIDGLSIYEEPVFENKIIVGDFSSFILSRSINIKNYDLIYAGAQKNIGPAGITIIIIRKNIIGSSSKMTPSILDYKKISDHHSMFNTPPTFAWYLSGLVFKWLKKQGGLKAIEKLNKKKSDLLYKKIDNSDFYINKINSKHRSQMNVVFHLVNPKLNYIFLKEASKTGLNYLRGHSIVGGMRASLYNAMPLEGVESLVKFMSYFEKRYG.

Arg42 provides a ligand contact to L-glutamate. Residues 76 to 77 (AR), Trp102, Thr153, Asp173, and Gln196 contribute to the pyridoxal 5'-phosphate site. Lys197 carries the post-translational modification N6-(pyridoxal phosphate)lysine. 238–239 (NT) serves as a coordination point for pyridoxal 5'-phosphate.

This sequence belongs to the class-V pyridoxal-phosphate-dependent aminotransferase family. SerC subfamily. As to quaternary structure, homodimer. Pyridoxal 5'-phosphate serves as cofactor.

It localises to the cytoplasm. The enzyme catalyses O-phospho-L-serine + 2-oxoglutarate = 3-phosphooxypyruvate + L-glutamate. The catalysed reaction is 4-(phosphooxy)-L-threonine + 2-oxoglutarate = (R)-3-hydroxy-2-oxo-4-phosphooxybutanoate + L-glutamate. Its pathway is amino-acid biosynthesis; L-serine biosynthesis; L-serine from 3-phospho-D-glycerate: step 2/3. It participates in cofactor biosynthesis; pyridoxine 5'-phosphate biosynthesis; pyridoxine 5'-phosphate from D-erythrose 4-phosphate: step 3/5. Catalyzes the reversible conversion of 3-phosphohydroxypyruvate to phosphoserine and of 3-hydroxy-2-oxo-4-phosphonooxybutanoate to phosphohydroxythreonine. This chain is Phosphoserine aminotransferase, found in Buchnera aphidicola subsp. Acyrthosiphon pisum (strain Tuc7).